Reading from the N-terminus, the 687-residue chain is Glycine--tRNA ligase beta subunit (687 aa).

It belongs to the class-II aminoacyl-tRNA synthetase family. As to quaternary structure, tetramer of two alpha and two beta subunits.

It is found in the cytoplasm. The enzyme catalyses tRNA(Gly) + glycine + ATP = glycyl-tRNA(Gly) + AMP + diphosphate. The chain is Glycine--tRNA ligase beta subunit from Trichlorobacter lovleyi (strain ATCC BAA-1151 / DSM 17278 / SZ) (Geobacter lovleyi).